The chain runs to 401 residues: MITLEDIKEAQRTLKNVVHRTALAYSSVLSEVTGGEIYLKMENLQKTGSFKIRGAYNKIAHLSEEERKRGVVAASAGNHAQGVALAAQIFGIPATIVMPRYAPLSKITKTRNLGAQVILEGNIFDEAYEAALRIQEKTGAVFVHPFNDPHVIAGQGTIGLEIMEDLPDVEVVVVPVGGGGLISGVSVAIKSMNPEVKVIGVQTENMPSMIASLRRGRAERVEGKPTLADGIAVKKPGDLTFELVKKYVDEMVAVNEEEIADAILFLLEQAKVVAEGAGAVGVAAVLNKLDVKGKKVAIVISGGNIDVNMIDRIINKGLVKSGRKVFIETFVMDRPGALKELLGIVAELGANVLSVFHNRSAKEVPIGFAKIELELETVDEKHVEEIERVLIAKGYEVRIVG.

Lys51 carries the N6-(pyridoxal phosphate)lysine modification. Residues Asn78, 178-181, and Ser301 each bind pyridoxal 5'-phosphate; that span reads GGGL. In terms of domain architecture, ACT spans 326-401; sequence FIETFVMDRP…AKGYEVRIVG (76 aa).

This sequence belongs to the serine/threonine dehydratase family. As to quaternary structure, homotetramer. Pyridoxal 5'-phosphate serves as cofactor.

The catalysed reaction is L-threonine = 2-oxobutanoate + NH4(+). It carries out the reaction L-serine = pyruvate + NH4(+). Its pathway is amino-acid biosynthesis; L-isoleucine biosynthesis; 2-oxobutanoate from L-threonine: step 1/1. Its activity is regulated as follows. Activity is insensitive to allosteric regulators L-valine and L-isoleucine at low concentrations, while these L-amino acids are inhibitors at high concentrations. Is insensitive to ammonium chloride and AMP. Inhibited in the presence of aminoxyacetic acid (AOAA), an inhibitor of pyridoxal phosphate-dependent enzymes. In terms of biological role, catalyzes the conversion of L-threonine to 2-oxobutanoate and ammonia. Can also use L-serine, but the catalytic efficiency toward L-threonine is about sixfold higher than that toward L-serine. Also shows weak activity toward L-allo-threonine, but cannot use the corresponding D-amino acids. Does not exhibit racemase activity toward various amino acids, including serine. Physiologically, is likely involved in the threonine-dependent pathway of isoleucine biosynthesis. This chain is L-threonine ammonia-lyase, found in Thermotoga maritima (strain ATCC 43589 / DSM 3109 / JCM 10099 / NBRC 100826 / MSB8).